A 287-amino-acid polypeptide reads, in one-letter code: MGQCLGLVQIDQSTVAIKENFGKFSEVLEPGCHFLPWCIGQQIAGYLSLRVKQLDVRCETKTKDNVFVTVVASVQYRALADKASDAFYKLSNTREQIQSYVFDVIRATVPKLNLDDAFEQKNDIAKAVEDELEKAMSAYGYEIVQTLIIDIEPDVHVKRAMNEINAAARLRVAANEKAEAEKILQIKKAEGEAESKYLAGVGIARQRQAIVDGLRDSVLAFSENVPGTTAKDIMDMVLVTQYFDTMKEIGASSKSTSVFIPHGPGAVKDVAAQIRDGLLQANAERND.

The N-myristoyl glycine moiety is linked to residue glycine 2.

Functionally, positive regulator of hypersensitive response (HR)-like cell death. May be involved in potassium ion channel regulation. The protein is Hypersensitive-induced response protein-like protein 2 (HIRL2) of Oryza sativa subsp. japonica (Rice).